The sequence spans 222 residues: Ribonuclease 3 (222 aa).

The 123-residue stretch at 3-125 (SQSVAKKLNH…LFGAIYLDAG (123 aa)) folds into the RNase III domain. Glu-38 provides a ligand contact to Mg(2+). Residue Asp-42 is part of the active site. Positions 111 and 114 each coordinate Mg(2+). Glu-114 is an active-site residue. Residues 152–222 (DAKTRLQEWL…AEKALKELLA (71 aa)) form the DRBM domain.

This sequence belongs to the ribonuclease III family. As to quaternary structure, homodimer. The cofactor is Mg(2+).

The protein resides in the cytoplasm. The catalysed reaction is Endonucleolytic cleavage to 5'-phosphomonoester.. Functionally, digests double-stranded RNA. Involved in the processing of primary rRNA transcript to yield the immediate precursors to the large and small rRNAs (23S and 16S). Processes some mRNAs, and tRNAs when they are encoded in the rRNA operon. Processes pre-crRNA and tracrRNA of type II CRISPR loci if present in the organism. The chain is Ribonuclease 3 from Dechloromonas aromatica (strain RCB).